The primary structure comprises 213 residues: Large ribosomal subunit protein bL25 (213 aa).

The segment covering 191-207 (AEPTDAPTAPAAAPGAE) has biased composition (low complexity). Residues 191–213 (AEPTDAPTAPAAAPGAEAPKDKA) form a disordered region.

This sequence belongs to the bacterial ribosomal protein bL25 family. CTC subfamily. As to quaternary structure, part of the 50S ribosomal subunit; part of the 5S rRNA/L5/L18/L25 subcomplex. Contacts the 5S rRNA. Binds to the 5S rRNA independently of L5 and L18.

This is one of the proteins that binds to the 5S RNA in the ribosome where it forms part of the central protuberance. This chain is Large ribosomal subunit protein bL25, found in Polynucleobacter asymbioticus (strain DSM 18221 / CIP 109841 / QLW-P1DMWA-1) (Polynucleobacter necessarius subsp. asymbioticus).